The sequence spans 275 residues: NADPH-dependent 7-cyano-7-deazaguanine reductase (275 aa).

Residue 81-83 (VES) coordinates substrate. 83–84 (SK) provides a ligand contact to NADPH. Cys-182 acts as the Thioimide intermediate in catalysis. Catalysis depends on Asp-189, which acts as the Proton donor. Substrate is bound at residue 221-222 (HE). An NADPH-binding site is contributed by 250 to 251 (RG).

The protein belongs to the GTP cyclohydrolase I family. QueF type 2 subfamily. Homodimer.

The protein localises to the cytoplasm. The enzyme catalyses 7-aminomethyl-7-carbaguanine + 2 NADP(+) = 7-cyano-7-deazaguanine + 2 NADPH + 3 H(+). Its pathway is tRNA modification; tRNA-queuosine biosynthesis. Functionally, catalyzes the NADPH-dependent reduction of 7-cyano-7-deazaguanine (preQ0) to 7-aminomethyl-7-deazaguanine (preQ1). The sequence is that of NADPH-dependent 7-cyano-7-deazaguanine reductase from Polaromonas sp. (strain JS666 / ATCC BAA-500).